Consider the following 209-residue polypeptide: HTH-type transcriptional repressor BepR (209 aa).

One can recognise an HTH tetR-type domain in the interval 9 to 69 (AETREAILLA…SIIGRARFPQ (61 aa)). Positions 32-51 (TLTEIACYAGVTRGAIYFHF) form a DNA-binding region, H-T-H motif.

In terms of biological role, represses expression of bepDE. This chain is HTH-type transcriptional repressor BepR (bepR), found in Brucella suis biovar 1 (strain 1330).